The primary structure comprises 625 residues: DNA mismatch repair protein MutL (625 aa).

Belongs to the DNA mismatch repair MutL/HexB family.

Its function is as follows. This protein is involved in the repair of mismatches in DNA. It is required for dam-dependent methyl-directed DNA mismatch repair. May act as a 'molecular matchmaker', a protein that promotes the formation of a stable complex between two or more DNA-binding proteins in an ATP-dependent manner without itself being part of a final effector complex. In Bacteroides fragilis (strain YCH46), this protein is DNA mismatch repair protein MutL.